We begin with the raw amino-acid sequence, 196 residues long: Peptidyl-tRNA hydrolase (196 aa).

Tyr18 contacts tRNA. His23 acts as the Proton acceptor in catalysis. Residues Phe69, Asn71, and Asn117 each coordinate tRNA.

This sequence belongs to the PTH family. Monomer.

The protein localises to the cytoplasm. It carries out the reaction an N-acyl-L-alpha-aminoacyl-tRNA + H2O = an N-acyl-L-amino acid + a tRNA + H(+). Hydrolyzes ribosome-free peptidyl-tRNAs (with 1 or more amino acids incorporated), which drop off the ribosome during protein synthesis, or as a result of ribosome stalling. Its function is as follows. Catalyzes the release of premature peptidyl moieties from peptidyl-tRNA molecules trapped in stalled 50S ribosomal subunits, and thus maintains levels of free tRNAs and 50S ribosomes. The protein is Peptidyl-tRNA hydrolase of Marinobacter nauticus (strain ATCC 700491 / DSM 11845 / VT8) (Marinobacter aquaeolei).